A 342-amino-acid chain; its full sequence is UDP-N-acetylglucosamine--N-acetylmuramyl-(pentapeptide) pyrophosphoryl-undecaprenol N-acetylglucosamine transferase (342 aa).

Residues 10–12 (TGG), asparagine 124, serine 177, and glutamine 275 each bind UDP-N-acetyl-alpha-D-glucosamine.

This sequence belongs to the glycosyltransferase 28 family. MurG subfamily.

It is found in the cell inner membrane. The catalysed reaction is di-trans,octa-cis-undecaprenyl diphospho-N-acetyl-alpha-D-muramoyl-L-alanyl-D-glutamyl-meso-2,6-diaminopimeloyl-D-alanyl-D-alanine + UDP-N-acetyl-alpha-D-glucosamine = di-trans,octa-cis-undecaprenyl diphospho-[N-acetyl-alpha-D-glucosaminyl-(1-&gt;4)]-N-acetyl-alpha-D-muramoyl-L-alanyl-D-glutamyl-meso-2,6-diaminopimeloyl-D-alanyl-D-alanine + UDP + H(+). The protein operates within cell wall biogenesis; peptidoglycan biosynthesis. In terms of biological role, cell wall formation. Catalyzes the transfer of a GlcNAc subunit on undecaprenyl-pyrophosphoryl-MurNAc-pentapeptide (lipid intermediate I) to form undecaprenyl-pyrophosphoryl-MurNAc-(pentapeptide)GlcNAc (lipid intermediate II). The polypeptide is UDP-N-acetylglucosamine--N-acetylmuramyl-(pentapeptide) pyrophosphoryl-undecaprenol N-acetylglucosamine transferase (Campylobacter jejuni subsp. jejuni serotype O:6 (strain 81116 / NCTC 11828)).